Here is a 394-residue protein sequence, read N- to C-terminus: MPANAPITQDVHTIPRKLPDGPVNLVGLTRAAMRDALIAEGTPEKQAKMRVGQIWQWIYQWGVRDFDLMTNLSKAYRAQLKEKFVVEVPEVVTRQVSEDGTRKYLVRIAGGHEVEVVYIPDEGRGTLCVSSQVGCTLTCSFCHTGTQKLVRNLTAAEIIGQVMVARDDLGEWPEIGAPKDETRLLSNIVLMGMGEPLYNFENVRDAMKIAMDPEGIQLSRRRITLSTSGVVPEIARTAVEIGCQLAVSFHATTDDVRDTLVPINKRWNIEVLLEALRAYPKVSNSERITFEYVMLHGVNDSDEDARRLVKLIDGIPAKINLIPFNEWPGAPYKRSSNNRIRAFADIIYKAGYASPIRTPRGEDIMAACGQLKSATERARKSRKQIAAETGLAGA.

The active-site Proton acceptor is the Glu-115. One can recognise a Radical SAM core domain in the interval 121 to 363 (DEGRGTLCVS…SPIRTPRGED (243 aa)). A disulfide bond links Cys-128 and Cys-368. The [4Fe-4S] cluster site is built by Cys-135, Cys-139, and Cys-142. Residues 194 to 195 (GE), Ser-226, 248 to 250 (SFH), and Asn-325 each bind S-adenosyl-L-methionine. The active-site S-methylcysteine intermediate is the Cys-368.

The protein belongs to the radical SAM superfamily. RlmN family. [4Fe-4S] cluster serves as cofactor.

It is found in the cytoplasm. The catalysed reaction is adenosine(2503) in 23S rRNA + 2 reduced [2Fe-2S]-[ferredoxin] + 2 S-adenosyl-L-methionine = 2-methyladenosine(2503) in 23S rRNA + 5'-deoxyadenosine + L-methionine + 2 oxidized [2Fe-2S]-[ferredoxin] + S-adenosyl-L-homocysteine. It catalyses the reaction adenosine(37) in tRNA + 2 reduced [2Fe-2S]-[ferredoxin] + 2 S-adenosyl-L-methionine = 2-methyladenosine(37) in tRNA + 5'-deoxyadenosine + L-methionine + 2 oxidized [2Fe-2S]-[ferredoxin] + S-adenosyl-L-homocysteine. Specifically methylates position 2 of adenine 2503 in 23S rRNA and position 2 of adenine 37 in tRNAs. m2A2503 modification seems to play a crucial role in the proofreading step occurring at the peptidyl transferase center and thus would serve to optimize ribosomal fidelity. This Roseobacter denitrificans (strain ATCC 33942 / OCh 114) (Erythrobacter sp. (strain OCh 114)) protein is Dual-specificity RNA methyltransferase RlmN.